The sequence spans 1860 residues: MEDRRPQKSCDEAIGSLVRQEYEAAVAHSTEALLAMGPRTPTPSTALLRTRALLYRIAARLQLKDYDQADEDCKHVFAEELAKGDGSFRAGLQSLLLDGSLQEVCSVLSKALYGEPLNGIMTKDMTRLKRLLSEIEAARSKVVFSEENEEDVQEGWQFRPPPRGVTSSEEYTLCKRFLEQGLCRYGAQCTSAHSQEELTEWQRRYASRLIRLKQQQEGKHFSENYMEALIEKWINSLTPERVMNDCVDGVTVEHSSDLSITVNTKKSSHSWTFTLFCKPVRTLQRIALLYDANRPHFSIAAVSAGDASALEPQPVCPGGCQEWSAASPVQNGMDHCIYTVEIAFSTEIFGTFRQTVVFDLGCEPVLMQRVMVDAASIEDLEHLLQARQQLLMTAKRWDSSCKTIVEFVPNENMDLERSLLTRYQIPLSADQLFTQSVLDKTLTRDNYQPRLHDLLYIEEIAQYKEVTKFNIKVNLQLVTSFMLTGISGGAKYAQNGQLFARFKLTETLSEDTLAGRLVMTKVNSVLLLPVFKERMGQNQPAGAKERVYEALIEEKTKDYIFLRVCKECCDELGLVADQELQVELQFQLNRLPLCEMHYALDRVRDNSILFPDISLTPTIPWSPNRQWDEQLDPRLNAKQKEAILAITTPLSINLPPVLIIGPYGTGKTFTLAQAVKHILKQPESRVLICTHSNSAADLYIKDYLHPYVEAGNPHARPLRVYFRNRWVKTVHPLVQQYCLISGAHFTFQMPTRQDVERHRVVVVTLSTSQYLCQLDLEPGIFTHILLDEAAQAMECETIMPLALAVKSTRVVLAGDHMQLSPFVYSEFARERNLHVSLLDRLYEHYPSEYPCRILLCENYRSHEAIINYTSDLFYEGKLMASGKQPPHKDFYPLTFFTARGEDVQEKNSTAYYNNAEVFEIVERVEEMRKKWPVSWGKLEEGSIGVVSPYADQVFRIRAELRKKRMSEVSVERVLNVQGKQFRVLFLSTVRTRHTCKHKQTAIKRKEQLVEDSTEDLDYGFLSNYKLLNTAITRAQSLVAVVGDPIALCSVGRCRKFWETFISICHENHSLHGITFEQIKIQLEALELKKTYVLNPLAPEFIPRALRSQHPPQQGPGKHQHSPPKAKGQLANHTEPFPPEGFVQPNAAVLMGNPIQAFTPPGAGAPASGKSPSPVQRLDPGASILYVPAVYGGNMVMPMPLPLPWAGYQSRFPMDPRIMSHQAAMYNLNLRPAASRTSPVLYGFSHASPLGLNQQQNTEKELLQEPSGNGKMDINGKAEHCRLLTPERKAPELKEKQGDLESVQNKSPEPQSNMGFPANRLIRKDPQRALNFHMAPPHPAFPSHHGTSQFPQQYGLSRPPLRMQTPMHPQASSFPPSFYSGPPMGPRGLQSPVLEGGEDPMGAGMSEDLKGVVRGLPAQMHQQPLRLNSFGEESLDSLLGDTLDGQASSGMDALQHQQQARVGQWGEHTPFLPAGVAPFPLPQQLAHLAQPGLRIPPQILRAGWGLGPAADEEPRPTMPRYPGLLREMLPQDQQYEQRDPAEMPPPQSRLLQYRQQIQPRSPGDLPSPSSSAPNHNFPAPAQPSYPDTSREPPVGFSQAPFPPDHSAGPLPVKYLLQEAHWPHPGHMLGHGLPFGLQAMAQRQDPGPLQHQQQKQQLQAPQSSLHSLDEYEPRGPGRPLYQRRISSSSPQPYPDSLEPQDQPVPSYRYPSADLWLGGPGPVPGPAPIHNIPCNGASHIGPHREILVSKAMSEEQMKAECLQPPPPPPPHPASAASLQHHGQFPPLLPSKQTPPDPGGGGNTSPAGHPKPPTMSYASALRAPPKPRPMLPEQSKKNSDPISLLQELSIGSSNSSNGYYTYFK.

Residues 168 to 196 (SEEYTLCKRFLEQGLCRYGAQCTSAHSQE) form a C3H1-type zinc finger. An ATP-binding site is contributed by 661–668 (GPYGTGKT). Positions 787-790 (DEAA) match the DEAA box motif. Disordered stretches follow at residues 1106-1136 (RSQH…TEPF), 1158-1177 (TPPG…VQRL), 1286-1317 (ERKA…GFPA), 1556-1604 (IQPR…PPDH), 1641-1709 (RQDP…RYPS), and 1749-1860 (MSEE…TYFK). Low complexity predominate over residues 1107–1116 (SQHPPQQGPG). Positions 1286–1298 (ERKAPELKEKQGD) are enriched in basic and acidic residues. Positions 1301-1313 (SVQNKSPEPQSNM) are enriched in polar residues. A compositionally biased stretch (low complexity) spans 1641-1660 (RQDPGPLQHQQQKQQLQAPQ). Pro residues-rich tracts occupy residues 1760 to 1769 (QPPPPPPPHP) and 1783 to 1794 (PLLPSKQTPPDP). A compositionally biased stretch (low complexity) spans 1847–1860 (GSSNSSNGYYTYFK).

Belongs to the DNA2/NAM7 helicase family.

The protein resides in the nucleus. May act as a helicase. This is Probable helicase with zinc finger domain (helz) from Danio rerio (Zebrafish).